The chain runs to 81 residues: Acyl carrier protein (81 aa).

Positions 2-80 constitute a Carrier domain; it reads ASNEEILAGL…DAVSYIASAQ (79 aa). The residue at position 40 (Ser40) is an O-(pantetheine 4'-phosphoryl)serine.

It belongs to the acyl carrier protein (ACP) family. In terms of processing, 4'-phosphopantetheine is transferred from CoA to a specific serine of apo-ACP by AcpS. This modification is essential for activity because fatty acids are bound in thioester linkage to the sulfhydryl of the prosthetic group.

The protein localises to the cytoplasm. It functions in the pathway lipid metabolism; fatty acid biosynthesis. Functionally, carrier of the growing fatty acid chain in fatty acid biosynthesis. The protein is Acyl carrier protein of Renibacterium salmoninarum (strain ATCC 33209 / DSM 20767 / JCM 11484 / NBRC 15589 / NCIMB 2235).